The sequence spans 240 residues: UDP-2,3-diacylglucosamine hydrolase (240 aa).

Residues Asp8, His10, Asp41, Asn79, and His114 each contribute to the Mn(2+) site. 79–80 serves as a coordination point for substrate; the sequence is NR. Substrate contacts are provided by Asp122, Ser160, Asn164, Lys167, and His195. 2 residues coordinate Mn(2+): His195 and His197.

It belongs to the LpxH family. Requires Mn(2+) as cofactor.

It localises to the cell inner membrane. It carries out the reaction UDP-2-N,3-O-bis[(3R)-3-hydroxytetradecanoyl]-alpha-D-glucosamine + H2O = 2-N,3-O-bis[(3R)-3-hydroxytetradecanoyl]-alpha-D-glucosaminyl 1-phosphate + UMP + 2 H(+). Its pathway is glycolipid biosynthesis; lipid IV(A) biosynthesis; lipid IV(A) from (3R)-3-hydroxytetradecanoyl-[acyl-carrier-protein] and UDP-N-acetyl-alpha-D-glucosamine: step 4/6. Functionally, hydrolyzes the pyrophosphate bond of UDP-2,3-diacylglucosamine to yield 2,3-diacylglucosamine 1-phosphate (lipid X) and UMP by catalyzing the attack of water at the alpha-P atom. Involved in the biosynthesis of lipid A, a phosphorylated glycolipid that anchors the lipopolysaccharide to the outer membrane of the cell. The chain is UDP-2,3-diacylglucosamine hydrolase from Serratia proteamaculans (strain 568).